A 247-amino-acid chain; its full sequence is 1-(5-phosphoribosyl)-5-[(5-phosphoribosylamino)methylideneamino] imidazole-4-carboxamide isomerase 1 (247 aa).

Catalysis depends on Glu8, which acts as the Proton acceptor. The active-site Proton donor is Asp128.

This sequence belongs to the HisA/HisF family.

The protein localises to the cytoplasm. It carries out the reaction 1-(5-phospho-beta-D-ribosyl)-5-[(5-phospho-beta-D-ribosylamino)methylideneamino]imidazole-4-carboxamide = 5-[(5-phospho-1-deoxy-D-ribulos-1-ylimino)methylamino]-1-(5-phospho-beta-D-ribosyl)imidazole-4-carboxamide. The protein operates within amino-acid biosynthesis; L-histidine biosynthesis; L-histidine from 5-phospho-alpha-D-ribose 1-diphosphate: step 4/9. The sequence is that of 1-(5-phosphoribosyl)-5-[(5-phosphoribosylamino)methylideneamino] imidazole-4-carboxamide isomerase 1 from Ruegeria sp. (strain TM1040) (Silicibacter sp.).